Here is a 1337-residue protein sequence, read N- to C-terminus: Partitioning defective 3 homolog (1337 aa).

A Phosphoserine modification is found at Ser-25. Disordered stretches follow at residues 81-109 (EQDP…SELG) and 143-263 (SSDP…LENM). Thr-91 bears the Phosphothreonine mark. Over residues 91–100 (TSASSTGTQS) the composition is skewed to low complexity. Composition is skewed to polar residues over residues 150–163 (GLST…FSSE) and 171–188 (TRWS…TGSP). Residues Ser-156 and Ser-174 each carry the phosphoserine modification. Basic and acidic residues predominate over residues 190-203 (TCDRKKDENYRSLP). Polar residues predominate over residues 207–224 (SSWSNQFQRDNARSSLSA). The region spanning 271 to 359 (MVKLVQVPND…ARVIWFHVVP (89 aa)) is the PDZ 1 domain. Ser-383 carries the phosphoserine modification. The tract at residues 397 to 441 (NAPQALPRAPRLSQPPEQLDAHPRLPHSAHASTKPPTAPALAPPN) is disordered. PDZ domains lie at 461–546 (NIQL…LVFR) and 590–677 (EVPL…GMIQ). Tyr-489 is subject to Phosphotyrosine. Phosphoserine is present on residues Ser-692, Ser-695, Ser-715, Ser-728, Ser-809, and Ser-827. An interaction with PRKCI and PRKCZ region spans residues 712 to 936 (RRISHSLYSG…AAIDKSYDKP (225 aa)). Lys-834 bears the N6-acetyllysine mark. A Phosphoserine modification is found at Ser-837. Lys-851 bears the N6-acetyllysine mark. Phosphoserine occurs at positions 852 and 873. Disordered regions lie at residues 866–888 (VDDQ…KKSS), 932–1015 (SYDK…AKKG), 1028–1055 (KHRK…DRVR), 1110–1271 (LNAR…LGGH), and 1284–1337 (LLRQ…PFYS). An N6-acetyllysine modification is found at Lys-885. The tract at residues 935 to 1337 (KPMVDDDDEG…TPEKGRPFYS (403 aa)) is interaction with FRMD4A. Residues 939–953 (DDDDEGMETLEEDTE) are compositionally biased toward acidic residues. Ser-962 is subject to Phosphoserine; by AURKA. 2 positions are modified to phosphoserine: Ser-971 and Ser-973. 2 stretches are compositionally biased toward basic and acidic residues: residues 981–1009 (DPEK…EKDK) and 1030–1043 (RKDD…RIKI). Ser-1046 is subject to Phosphoserine. Positions 1050–1082 (EEDRVRMKEEQERIQAKTREFRERQARERDYAE) form a coiled coil. Residues 1138 to 1147 (PGDSNRSTPS) are compositionally biased toward polar residues. The segment covering 1148 to 1175 (NHDRIQRLRQEFQQAKQDEDVEDRRRTY) has biased composition (basic and acidic residues). Coiled-coil stretches lie at residues 1149–1172 (HDRI…EDRR), 1199–1222 (VQVQ…YSSL), and 1278–1299 (MLET…LKKQ). Residues 1180-1203 (SWSSSRPASQSGRHSVSVEVQVQR) are compositionally biased toward low complexity. Residues 1219–1240 (YSSLPRQSRKNASSVSQDSWEQ) show a composition bias toward polar residues. Residues 1284-1296 (LLRQEQRRKEQQL) are compositionally biased toward basic and acidic residues. Residues 1318–1327 (SQVARLNRLQ) are compositionally biased toward polar residues. A compositionally biased stretch (basic and acidic residues) spans 1328–1337 (TPEKGRPFYS). Lys-1331 is subject to N6-acetyllysine.

The protein belongs to the PAR3 family. Component of a complex whose core is composed of ARHGAP17, AMOT, PALS1, PATJ and PARD3/PAR3. Interacts (via PDZ 1 domain) with PARD6A, PARD6B and F11R/JAM1. Interacts with AURKA, AURKB and SIRT2. Interacts with PRKCI. Interacts with PRKCZ. Part of a complex with PARD6A or PARD6B, PRKCI or PRKCZ and CDC42 or RAC1. Interacts with LIMK2 and CDH5. Component of the Par polarity complex, composed of at least phosphorylated PRKCZ, PARD3 and TIAM1. Directly interacts with TIAM1 and TIAM2. Interacts with ECT2 and FBF1. Interacts (via PDZ 3 domain) with PTEN (via C-terminus). Interacts (via coiled-coil domain) with FRMD4A. Found in a complex with PARD3, CYTH1 and FRMD4A. Interacts with SAPCD2. Interacts with PRKCA. As to quaternary structure, interacts with PRKCZ. In terms of processing, acetylated. Deacetylated by SIRT2, thereby inhibiting Schwann cell peripheral myelination. Phosphorylation at Ser-827 by PRKCZ and PRKCI occurs at the most apical tip of epithelial cell-cell contacts during the initial phase of tight junction formation and may promote dissociation of the complex with PARD6. EGF-induced Tyr-1127 phosphorylation mediates dissociation from LIMK2. Phosphorylation by AURKA at Ser-962 is required for the normal establishment of neuronal polarity. As to expression, isoform 1 is predominantly expressed in lung, glandular stomach, prostate, ovary and uterus. Isoform 1 is also expressed in brain, with a high expression in the cortex, hippocampus and in the striatum. Isoform 2 is predominantly expressed in intestinal epithelial cells, kidney and prostate.

The protein localises to the cytoplasm. Its subcellular location is the endomembrane system. The protein resides in the cell junction. It is found in the tight junction. It localises to the adherens junction. The protein localises to the cell cortex. Its subcellular location is the cytoskeleton. The protein resides in the cell membrane. Functionally, adapter protein involved in asymmetrical cell division and cell polarization processes. Seems to play a central role in the formation of epithelial tight junctions. Association with PARD6B may prevent the interaction of PARD3 with F11R/JAM1, thereby preventing tight junction assembly. The PARD6-PARD3 complex links GTP-bound Rho small GTPases to atypical protein kinase C proteins. Required for establishment of neuronal polarity and normal axon formation in cultured hippocampal neurons. Involved in Schwann cell peripheral myelination. Targets the phosphatase PTEN to cell junctions. The protein is Partitioning defective 3 homolog (Pard3) of Rattus norvegicus (Rat).